A 1073-amino-acid polypeptide reads, in one-letter code: 3-hydroxy-3-methylglutaryl-coenzyme A reductase 1 (1073 aa).

8 consecutive transmembrane segments (helical) span residues Phe23 to Ile43, Phe181 to Phe201, Phe211 to Val231, His298 to Leu318, Ser326 to Leu346, Ile399 to Gly419, Gly459 to Leu479, and Ile498 to Leu518. The SSD domain maps to Asp182–Leu346. Low complexity predominate over residues Ser542 to Thr565. A disordered region spans residues Ser542–Glu589. Residues Pro579–Glu589 show a composition bias toward acidic residues. Glu714 functions as the Charge relay system in the catalytic mechanism. Position 720-726 (Ser720–Lys726) interacts with CoA. NADP(+) is bound by residues Ser781–Phe783 and Asp808–Ser816. Lys848 functions as the Charge relay system in the catalytic mechanism. Residue Val877–Lys879 coordinates CoA. Asp924 acts as the Charge relay system in catalysis. Residues Ile997–His1017 traverse the membrane as a helical segment. A CoA-binding site is contributed by Ser1021–His1022. His1022 functions as the Proton donor in the catalytic mechanism. The segment at His1025–Asn1056 is disordered. Asn1026–Arg1027 is a binding site for NADP(+). The span at Ala1030–Ala1042 shows a compositional bias: low complexity. A compositionally biased stretch (polar residues) spans Ser1046–Ser1055.

The protein belongs to the HMG-CoA reductase family.

Its subcellular location is the endoplasmic reticulum membrane. The catalysed reaction is (R)-mevalonate + 2 NADP(+) + CoA = (3S)-3-hydroxy-3-methylglutaryl-CoA + 2 NADPH + 2 H(+). It participates in metabolic intermediate biosynthesis; (R)-mevalonate biosynthesis; (R)-mevalonate from acetyl-CoA: step 3/3. In terms of biological role, HMG-CoA reductase; part of the first module of ergosterol biosynthesis pathway that includes the early steps of the pathway, conserved across all eukaryotes, and which results in the formation of mevalonate from acetyl-coenzyme A (acetyl-CoA). HMG1 catalyzes the reduction of hydroxymethylglutaryl-CoA (HMG-CoA) to mevalonate. The first module starts with the action of the cytosolic acetyl-CoA acetyltransferase ERG10 that catalyzes the formation of acetoacetyl-CoA. The hydroxymethylglutaryl-CoA synthase ERG13 then condenses acetyl-CoA with acetoacetyl-CoA to form HMG-CoA. The 3-hydroxy-3-methylglutaryl-coenzyme A (HMG-CoA) reductase HMG1 finally reduces HMG-CoA to produce mevalonate. This Candida albicans (strain SC5314 / ATCC MYA-2876) (Yeast) protein is 3-hydroxy-3-methylglutaryl-coenzyme A reductase 1.